We begin with the raw amino-acid sequence, 209 residues long: Mitochondrial import inner membrane translocase subunit Tim23 (209 aa).

The next 3 helical transmembrane spans lie at F73 to M93, A125 to I145, and G181 to W197.

This sequence belongs to the Tim17/Tim22/Tim23 family. As to quaternary structure, component of the TIM23 complex at least composed of TIMM23, TIMM17 (TIMM17A or TIMM17B) and TIMM50; within this complex, directly interacts with TIMM50. The complex interacts with the TIMM44 component of the PAM complex and with DNAJC15. Upon mitochondrial depolarization, interacts with PINK1; the interaction is required for PINK1 accumulation at the outer mitochondrial membrane, kinase activation by autophosphorylation and PRKN recruitement to mitochondria.

The protein resides in the mitochondrion inner membrane. In terms of biological role, essential component of the TIM23 complex, a complex that mediates the translocation of transit peptide-containing proteins across the mitochondrial inner membrane. Has a role in the activation of stress-induced mitophagy by protecting PINK1 from OMA1-mediated degradation and facilitating its accumulation at the outer mitochondrial membrane in response to depolarization. This Mus musculus (Mouse) protein is Mitochondrial import inner membrane translocase subunit Tim23 (Timm23).